The chain runs to 331 residues: Anthranilate phosphoribosyltransferase (331 aa).

Residues Gly79, 82–83 (GD), Ser87, 89–92 (NIST), 107–115 (KHCNGNISS), and Ser119 contribute to the 5-phospho-alpha-D-ribose 1-diphosphate site. Gly79 contacts anthranilate. Ser91 contacts Mg(2+). Residue Asn110 participates in anthranilate binding. Position 165 (Arg165) interacts with anthranilate. Asp223 and Glu224 together coordinate Mg(2+).

Belongs to the anthranilate phosphoribosyltransferase family. In terms of assembly, homodimer. It depends on Mg(2+) as a cofactor.

The enzyme catalyses N-(5-phospho-beta-D-ribosyl)anthranilate + diphosphate = 5-phospho-alpha-D-ribose 1-diphosphate + anthranilate. It participates in amino-acid biosynthesis; L-tryptophan biosynthesis; L-tryptophan from chorismate: step 2/5. Its function is as follows. Catalyzes the transfer of the phosphoribosyl group of 5-phosphorylribose-1-pyrophosphate (PRPP) to anthranilate to yield N-(5'-phosphoribosyl)-anthranilate (PRA). The polypeptide is Anthranilate phosphoribosyltransferase (Buchnera aphidicola subsp. Baizongia pistaciae (strain Bp)).